The sequence spans 233 residues: 3-dehydroquinate dehydratase (233 aa).

Residues glutamate 39–arginine 41 and arginine 73 each bind 3-dehydroquinate. Histidine 132 functions as the Proton donor/acceptor in the catalytic mechanism. Lysine 159 (schiff-base intermediate with substrate) is an active-site residue. Residues arginine 196 and glutamine 219 each coordinate 3-dehydroquinate.

The protein belongs to the type-I 3-dehydroquinase family. In terms of assembly, homodimer.

The catalysed reaction is 3-dehydroquinate = 3-dehydroshikimate + H2O. It participates in metabolic intermediate biosynthesis; chorismate biosynthesis; chorismate from D-erythrose 4-phosphate and phosphoenolpyruvate: step 3/7. Its function is as follows. Involved in the third step of the chorismate pathway, which leads to the biosynthesis of aromatic amino acids. Catalyzes the cis-dehydration of 3-dehydroquinate (DHQ) and introduces the first double bond of the aromatic ring to yield 3-dehydroshikimate. The chain is 3-dehydroquinate dehydratase from Methanococcoides burtonii (strain DSM 6242 / NBRC 107633 / OCM 468 / ACE-M).